The primary structure comprises 198 residues: Ciliary neurotrophic factor (198 aa).

It belongs to the CNTF family. As to expression, nervous system.

It localises to the cytoplasm. Functionally, CNTF is a survival factor for various neuronal cell types. Seems to prevent the degeneration of motor axons after axotomy. In Mus musculus (Mouse), this protein is Ciliary neurotrophic factor (Cntf).